The following is a 467-amino-acid chain: Dimethylamine methyltransferase MtbB3 (467 aa).

Position 356 (Pyl-356) is a non-standard amino acid, pyrrolysine.

It belongs to the dimethylamine methyltransferase family.

It carries out the reaction Co(I)-[dimethylamine-specific corrinoid protein] + dimethylamine + H(+) = methyl-Co(III)-[dimethylamine-specific corrinoid protein] + methylamine. The protein operates within one-carbon metabolism; methanogenesis from dimethylamine. Functionally, catalyzes the transfer of a methyl group from dimethylamine to the corrinoid cofactor of MtbC. In Methanosarcina mazei (strain ATCC BAA-159 / DSM 3647 / Goe1 / Go1 / JCM 11833 / OCM 88) (Methanosarcina frisia), this protein is Dimethylamine methyltransferase MtbB3 (mtbB3).